The following is a 182-amino-acid chain: uncharacterized protein (182 aa).

4 helical membrane-spanning segments follow: residues leucine 19–serine 39, isoleucine 51–isoleucine 71, isoleucine 87–phenylalanine 107, and cysteine 118–cysteine 138.

It localises to the membrane. This is an uncharacterized protein from Caenorhabditis elegans.